We begin with the raw amino-acid sequence, 357 residues long: DNA integrity scanning protein DisA (357 aa).

The DAC domain occupies 8–146 (VKSMINILQL…GNLRYTLKDI (139 aa)). Residues glycine 75, leucine 93, and 106-110 (MRHRT) each bind ATP.

It belongs to the DisA family. In terms of assembly, homooctamer. Mg(2+) serves as cofactor.

The catalysed reaction is 2 ATP = 3',3'-c-di-AMP + 2 diphosphate. Its function is as follows. Participates in a DNA-damage check-point that is active prior to asymmetric division when DNA is damaged. DisA forms globular foci that rapidly scan along the chromosomes during sporulation, searching for lesions. When a lesion is present, DisA pauses at the lesion site. This triggers a cellular response that culminates in a temporary block in sporulation initiation. Functionally, also has diadenylate cyclase activity, catalyzing the condensation of 2 ATP molecules into cyclic di-AMP (c-di-AMP). c-di-AMP acts as a signaling molecule that couples DNA integrity with progression of sporulation. The rise in c-di-AMP level generated by DisA while scanning the chromosome, operates as a positive signal that advances sporulation; upon encountering a lesion, the DisA focus arrests at the damaged site and halts c-di-AMP synthesis. The protein is DNA integrity scanning protein DisA of Bacillus cereus (strain G9842).